The primary structure comprises 284 residues: 2,3,4,5-tetrahydropyridine-2,6-dicarboxylate N-succinyltransferase (284 aa).

Positions 111 and 148 each coordinate substrate.

The protein belongs to the transferase hexapeptide repeat family. Homotrimer.

Its subcellular location is the cytoplasm. The catalysed reaction is (S)-2,3,4,5-tetrahydrodipicolinate + succinyl-CoA + H2O = (S)-2-succinylamino-6-oxoheptanedioate + CoA. It participates in amino-acid biosynthesis; L-lysine biosynthesis via DAP pathway; LL-2,6-diaminopimelate from (S)-tetrahydrodipicolinate (succinylase route): step 1/3. The chain is 2,3,4,5-tetrahydropyridine-2,6-dicarboxylate N-succinyltransferase from Mesorhizobium japonicum (strain LMG 29417 / CECT 9101 / MAFF 303099) (Mesorhizobium loti (strain MAFF 303099)).